The sequence spans 311 residues: Apolipoprotein E (311 aa).

Residues 1–18 (MKVWWAVLAAAILAGCRA) form the signal peptide. Tandem repeats lie at residues 74-95 (MLME…EQLS), 96-116 (PMAQ…GALE), 117-138 (ADME…AMLG), 139-160 (QSTE…KRLL), 161-182 (RDAE…EGAE), 183-204 (RGVS…LRVA), 205-226 (TVGT…ERLR), and 227-248 (GHLE…EQVE). Residues 74–248 (MLMEETMKEV…RLNEVREQVE (175 aa)) are 8 X 22 AA approximate tandem repeats. Met-136 is modified (methionine sulfoxide). A Phosphoserine modification is found at Ser-140. Positions 151–161 (HLRKLRKRLLR) are LDL and other lipoprotein receptors binding. 155–158 (LRKR) serves as a coordination point for heparin. The segment at 203 to 283 (VATVGTLAGR…SWFEPLVEDM (81 aa)) is lipid-binding and lipoprotein association. Residue Thr-205 is glycosylated (O-linked (GalNAc...) threonine). Position 222-229 (222-229 (GERLRGHL)) interacts with heparin. The segment at 259–311 (PQMRLQAEAFQARLKSWFEPLVEDMQRQWAGLVEKLQAAMPSKAPAAAPIENQ) is homooligomerization. Residues 271–283 (RLKSWFEPLVEDM) form a specificity for association with VLDL region.

This sequence belongs to the apolipoprotein A1/A4/E family. As to quaternary structure, homotetramer. May interact with ABCA1; functionally associated with ABCA1 in the biogenesis of HDLs. May interact with APP/A4 amyloid-beta peptide; the interaction is extremely stable in vitro but its physiological significance is unclear. May interact with MAPT. May interact with MAP2. In the cerebrospinal fluid, interacts with secreted SORL1. Interacts with PMEL; this allows the loading of PMEL luminal fragment on ILVs to induce fibril nucleation. APOE exists as multiple glycosylated and sialylated glycoforms within cells and in plasma. The extent of glycosylation and sialylation are tissue and context specific. In terms of processing, glycated in plasma VLDL. Post-translationally, phosphorylated by FAM20C in the extracellular medium.

It localises to the secreted. It is found in the extracellular space. The protein localises to the extracellular matrix. The protein resides in the extracellular vesicle. Its subcellular location is the endosome. It localises to the multivesicular body. APOE is an apolipoprotein, a protein associating with lipid particles, that mainly functions in lipoprotein-mediated lipid transport between organs via the plasma and interstitial fluids. APOE is a core component of plasma lipoproteins and is involved in their production, conversion and clearance. Apolipoproteins are amphipathic molecules that interact both with lipids of the lipoprotein particle core and the aqueous environment of the plasma. As such, APOE associates with chylomicrons, chylomicron remnants, very low density lipoproteins (VLDL) and intermediate density lipoproteins (IDL) but shows a preferential binding to high-density lipoproteins (HDL). It also binds a wide range of cellular receptors including the LDL receptor/LDLR and the very low-density lipoprotein receptor/VLDLR that mediate the cellular uptake of the APOE-containing lipoprotein particles. Finally, APOE also has a heparin-binding activity and binds heparan-sulfate proteoglycans on the surface of cells, a property that supports the capture and the receptor-mediated uptake of APOE-containing lipoproteins by cells. The protein is Apolipoprotein E (APOE) of Oryctolagus cuniculus (Rabbit).